The sequence spans 116 residues: uncharacterized protein (116 aa).

The signal sequence occupies residues 1–19 (MRWDVIILYAISRPYATRR). A disordered region spans residues 18–50 (RRTGSHTHPRDSRYIAANQRRPPSACRVGPSPA).

This is an uncharacterized protein from Saccharomyces cerevisiae (strain ATCC 204508 / S288c) (Baker's yeast).